The sequence spans 103 residues: Large ribosomal subunit protein uL23 (103 aa).

This sequence belongs to the universal ribosomal protein uL23 family. In terms of assembly, part of the 50S ribosomal subunit. Contacts protein L29, and trigger factor when it is bound to the ribosome.

In terms of biological role, one of the early assembly proteins it binds 23S rRNA. One of the proteins that surrounds the polypeptide exit tunnel on the outside of the ribosome. Forms the main docking site for trigger factor binding to the ribosome. This Pelodictyon phaeoclathratiforme (strain DSM 5477 / BU-1) protein is Large ribosomal subunit protein uL23.